A 487-amino-acid chain; its full sequence is Serine/threonine-protein kinase 4 (487 aa).

Methionine 1 bears the N-acetylmethionine mark. Threonine 3 is modified (phosphothreonine). Positions 30–281 (FDVLEKLGEG…ATQLLQHPFV (252 aa)) constitute a Protein kinase domain. ATP-binding positions include 36 to 44 (LGEGSYGSV) and lysine 59. Aspartate 149 functions as the Proton acceptor in the catalytic mechanism. The residue at position 183 (threonine 183) is a Phosphothreonine; by autocatalysis. Serine 265 is modified (phosphoserine). Residues 290–310 (LRDLINEAMDVKLKRQESQQR) adopt a coiled-coil conformation. Over residues 303 to 312 (KRQESQQREV) the composition is skewed to basic and acidic residues. Residues 303–332 (KRQESQQREVDQDDEENSEEDEMDSGTMVR) form a disordered region. Acidic residues predominate over residues 313–326 (DQDDEENSEEDEMD). The residue at position 320 (serine 320) is a Phosphoserine. 2 positions are modified to phosphothreonine: threonine 340 and threonine 367. Threonine 387 bears the Phosphothreonine; by PKB/AKT1 mark. 2 positions are modified to phosphoserine: serine 410 and serine 414. A Phosphotyrosine modification is found at tyrosine 433. Residues 433–480 (YEFLKSWTVEDLQKRLLALDPMMEQEIEEIRQKYQSKRQPILDAIEAK) form the SARAH domain.

The protein belongs to the protein kinase superfamily. STE Ser/Thr protein kinase family. STE20 subfamily. Homodimer; mediated via the coiled-coil region. Interacts with NORE1, which inhibits autoactivation. Interacts with and stabilizes SAV1. Interacts with RASSF1. Interacts with FOXO3. Interacts with RASSF2 (via SARAH domain). Interacts with AR, PKB/AKT1, TNNI3 and SIRT1. Interacts with DLG5 (via PDZ domain 3). Interacts with MARK3 and SCRIB in the presence of DLG5. Mg(2+) serves as cofactor. In terms of processing, autophosphorylated on serine and threonine residues. Phosphorylation at Thr-387 by PKB/AKT1, leads to inhibition of its: kinase activity, nuclear translocation and autophosphorylation at Thr-183. It also diminishes its cleavage by caspases and its ability to phosphorylate FOXO3. Proteolytically cleaved by caspase-3 during apoptosis at Asp-326 and Asp-349 resulting in a 37 kDa or a 39 kDa subunit respectively. The 39 kDa subunit is further cleaved into the 37 kDa form. Proteolytic cleavage results in kinase activation and nuclear translocation of the truncated form (MST1/N). It is less likely that cleavage at Asp-349 is a prerequisite for activation as this site is not conserved in the murine ortholog.

It is found in the cytoplasm. Its subcellular location is the nucleus. The catalysed reaction is L-seryl-[protein] + ATP = O-phospho-L-seryl-[protein] + ADP + H(+). It carries out the reaction L-threonyl-[protein] + ATP = O-phospho-L-threonyl-[protein] + ADP + H(+). Its activity is regulated as follows. Inhibited by the C-terminal non-catalytic region. Activated by caspase-cleavage. Full activation also requires homodimerization and autophosphorylation of Thr-183. Activated by RASSF1 which acts by preventing its dephosphorylation. Stress-activated, pro-apoptotic kinase which, following caspase-cleavage, enters the nucleus and induces chromatin condensation followed by internucleosomal DNA fragmentation. Key component of the Hippo signaling pathway which plays a pivotal role in organ size control and tumor suppression by restricting proliferation and promoting apoptosis. The core of this pathway is composed of a kinase cascade wherein STK3/MST2 and STK4/MST1, in complex with its regulatory protein SAV1, phosphorylates and activates LATS1/2 in complex with its regulatory protein MOB1, which in turn phosphorylates and inactivates YAP1 oncoprotein and WWTR1/TAZ. Phosphorylation of YAP1 by LATS2 inhibits its translocation into the nucleus to regulate cellular genes important for cell proliferation, cell death, and cell migration. STK3/MST2 and STK4/MST1 are required to repress proliferation of mature hepatocytes, to prevent activation of facultative adult liver stem cells (oval cells), and to inhibit tumor formation. Phosphorylates 'Ser-14' of histone H2B (H2BS14ph) during apoptosis. Phosphorylates FOXO3 upon oxidative stress, which results in its nuclear translocation and cell death initiation. Phosphorylates MOBKL1A, MOBKL1B and RASSF2. Phosphorylates TNNI3 (cardiac Tn-I) and alters its binding affinity to TNNC1 (cardiac Tn-C) and TNNT2 (cardiac Tn-T). Phosphorylates FOXO1 on 'Ser-212' and regulates its activation and stimulates transcription of PMAIP1 in a FOXO1-dependent manner. Phosphorylates SIRT1 and inhibits SIRT1-mediated p53/TP53 deacetylation, thereby promoting p53/TP53 dependent transcription and apoptosis upon DNA damage. Acts as an inhibitor of PKB/AKT1. Phosphorylates AR on 'Ser-650' and suppresses its activity by intersecting with PKB/AKT1 signaling and antagonizing formation of AR-chromatin complexes. The polypeptide is Serine/threonine-protein kinase 4 (STK4) (Papio anubis (Olive baboon)).